The chain runs to 283 residues: NAD kinase (283 aa).

Aspartate 66 functions as the Proton acceptor in the catalytic mechanism. NAD(+)-binding positions include aspartate 66 to glycine 67, asparagine 140 to aspartate 141, arginine 151, lysine 168, aspartate 170, threonine 181 to serine 186, and glutamine 240.

The protein belongs to the NAD kinase family. Requires a divalent metal cation as cofactor.

It localises to the cytoplasm. The enzyme catalyses NAD(+) + ATP = ADP + NADP(+) + H(+). Functionally, involved in the regulation of the intracellular balance of NAD and NADP, and is a key enzyme in the biosynthesis of NADP. Catalyzes specifically the phosphorylation on 2'-hydroxyl of the adenosine moiety of NAD to yield NADP. The sequence is that of NAD kinase from Geobacter metallireducens (strain ATCC 53774 / DSM 7210 / GS-15).